The chain runs to 265 residues: Type II pantothenate kinase (265 aa).

6-13 (DAGGTLIK) contributes to the ATP binding site. The active-site Proton acceptor is the Glu-70. ATP-binding positions include Thr-99, 121 to 125 (GGMIQ), Tyr-137, and Ser-225.

Belongs to the type II pantothenate kinase family. Homodimer.

It is found in the cytoplasm. It carries out the reaction (R)-pantothenate + ATP = (R)-4'-phosphopantothenate + ADP + H(+). Its pathway is cofactor biosynthesis; coenzyme A biosynthesis; CoA from (R)-pantothenate: step 1/5. Catalyzes the phosphorylation of pantothenate (Pan), the first step in CoA biosynthesis. This chain is Type II pantothenate kinase, found in Staphylococcus saprophyticus subsp. saprophyticus (strain ATCC 15305 / DSM 20229 / NCIMB 8711 / NCTC 7292 / S-41).